Reading from the N-terminus, the 337-residue chain is Inositol 2-dehydrogenase (337 aa).

Belongs to the Gfo/Idh/MocA family. In terms of assembly, homotetramer.

The enzyme catalyses myo-inositol + NAD(+) = scyllo-inosose + NADH + H(+). Involved in the oxidation of myo-inositol (MI) to 2-keto-myo-inositol (2KMI or 2-inosose). The sequence is that of Inositol 2-dehydrogenase from Corynebacterium glutamicum (strain R).